The following is a 1305-amino-acid chain: Cyclin-G-associated kinase (1305 aa).

At Ser-2 the chain carries N-acetylserine. A phosphoserine mark is found at Ser-2 and Ser-16. Positions 40–317 (LRVRRVLAEG…EVVRQLQEIA (278 aa)) constitute a Protein kinase domain. ATP contacts are provided by residues 46–54 (LAEGGFAFV) and Lys-69. Asp-173 functions as the Proton acceptor in the catalytic mechanism. The Phosphatase tensin-type domain occupies 397–564 (SVANYAKGDL…EYVCDMVAEE (168 aa)). Ser-454 bears the Phosphoserine mark. One can recognise a C2 tensin-type domain in the interval 570–708 (SKPMLVKSVV…FQVNLEVEVE (139 aa)). Disordered stretches follow at residues 707–732 (VEPR…NPKI) and 747–854 (FGKP…AAGT). Ser-768 is modified (phosphoserine). At Thr-774 the chain carries Phosphothreonine. Polar residues predominate over residues 776–789 (SDSPQSSSTDTNHF). A Phosphoserine modification is found at Ser-781. Thr-792 bears the Phosphothreonine mark. Polar residues predominate over residues 805-816 (LDNTSPKESQSV). Phosphoserine is present on residues Ser-809, Ser-824, and Ser-827. The segment covering 822–832 (DGSEVSDEEEA) has biased composition (acidic residues). Over residues 836-848 (SEERKPGAGEDTP) the composition is skewed to basic and acidic residues. At Ser-938 the chain carries Phosphoserine. Residues 1037–1139 (DTWADTATPG…WTPQAKPAPR (103 aa)) form a disordered region. The span at 1084 to 1099 (DLSDLSSSLQGLPAGL) shows a compositional bias: low complexity. A compositionally biased stretch (polar residues) spans 1111 to 1132 (TQKSNSPWQANRPTAPGTSWTP). Arg-1122 bears the Omega-N-methylarginine mark. A Phosphoserine modification is found at Ser-1171. The J domain maps to 1241 to 1305 (SRWTPVSMAD…FENQGSRPLF (65 aa)).

Belongs to the protein kinase superfamily. Ser/Thr protein kinase family.

It is found in the cytoplasm. The protein localises to the perinuclear region. Its subcellular location is the golgi apparatus. The protein resides in the trans-Golgi network. It localises to the cell junction. It is found in the focal adhesion. The protein localises to the cytoplasmic vesicle. Its subcellular location is the clathrin-coated vesicle. It carries out the reaction L-seryl-[protein] + ATP = O-phospho-L-seryl-[protein] + ADP + H(+). The catalysed reaction is L-threonyl-[protein] + ATP = O-phospho-L-threonyl-[protein] + ADP + H(+). Its function is as follows. Associates with cyclin G and CDK5. Seems to act as an auxilin homolog that is involved in the uncoating of clathrin-coated vesicles by Hsc70 in non-neuronal cells. Expression oscillates slightly during the cell cycle, peaking at G1. May play a role in clathrin-mediated endocytosis and intracellular trafficking, and in the dynamics of clathrin assembly/disassembly. The chain is Cyclin-G-associated kinase from Mus musculus (Mouse).